The following is a 385-amino-acid chain: Serine/threonine-protein kinase H2 (385 aa).

The 258-residue stretch at 63-320 (YDIKALIGTG…AGQALDHPWV (258 aa)) folds into the Protein kinase domain. ATP-binding positions include 69-77 (IGTGSFSRV) and Lys92. The segment at 342 to 367 (QRASPHSQSPGSAQSSKSHYSHKSRH) is disordered. Residues 344-359 (ASPHSQSPGSAQSSKS) are compositionally biased toward low complexity.

It belongs to the protein kinase superfamily. CAMK Ser/Thr protein kinase family.

The enzyme catalyses L-seryl-[protein] + ATP = O-phospho-L-seryl-[protein] + ADP + H(+). The catalysed reaction is L-threonyl-[protein] + ATP = O-phospho-L-threonyl-[protein] + ADP + H(+). This is Serine/threonine-protein kinase H2 (PSKH2) from Homo sapiens (Human).